The chain runs to 120 residues: Ribonuclease P protein component (120 aa).

This sequence belongs to the RnpA family. As to quaternary structure, consists of a catalytic RNA component (M1 or rnpB) and a protein subunit.

It catalyses the reaction Endonucleolytic cleavage of RNA, removing 5'-extranucleotides from tRNA precursor.. In terms of biological role, RNaseP catalyzes the removal of the 5'-leader sequence from pre-tRNA to produce the mature 5'-terminus. It can also cleave other RNA substrates such as 4.5S RNA. The protein component plays an auxiliary but essential role in vivo by binding to the 5'-leader sequence and broadening the substrate specificity of the ribozyme. This Pseudoalteromonas atlantica (strain T6c / ATCC BAA-1087) protein is Ribonuclease P protein component.